The sequence spans 160 residues: 6,7-dimethyl-8-ribityllumazine synthase (160 aa).

5-amino-6-(D-ribitylamino)uracil-binding positions include Phe-22, 57-59, and 81-83; these read AVE and AVI. Residue 86 to 87 coordinates (2S)-2-hydroxy-3-oxobutyl phosphate; it reads GT. His-89 (proton donor) is an active-site residue. 5-amino-6-(D-ribitylamino)uracil is bound at residue Phe-114. A (2S)-2-hydroxy-3-oxobutyl phosphate-binding site is contributed by Arg-128.

It belongs to the DMRL synthase family. As to quaternary structure, forms an icosahedral capsid composed of 60 subunits, arranged as a dodecamer of pentamers.

It carries out the reaction (2S)-2-hydroxy-3-oxobutyl phosphate + 5-amino-6-(D-ribitylamino)uracil = 6,7-dimethyl-8-(1-D-ribityl)lumazine + phosphate + 2 H2O + H(+). It functions in the pathway cofactor biosynthesis; riboflavin biosynthesis; riboflavin from 2-hydroxy-3-oxobutyl phosphate and 5-amino-6-(D-ribitylamino)uracil: step 1/2. In terms of biological role, catalyzes the formation of 6,7-dimethyl-8-ribityllumazine by condensation of 5-amino-6-(D-ribitylamino)uracil with 3,4-dihydroxy-2-butanone 4-phosphate. This is the penultimate step in the biosynthesis of riboflavin. This is 6,7-dimethyl-8-ribityllumazine synthase from Shewanella sediminis (strain HAW-EB3).